The sequence spans 659 residues: Threonine--tRNA ligase (659 aa).

The TGS domain maps to 1–61 (MIDLIFPDGS…TPDLLGGGNR (61 aa)). Residues 249 to 541 (DHRKLGKTMD…LLENYAGHLP (293 aa)) are catalytic. Positions 341, 392, and 518 each coordinate Zn(2+). The tract at residues 637–659 (EEATPPDLARDRAVAAPAELAQA) is disordered.

It belongs to the class-II aminoacyl-tRNA synthetase family. In terms of assembly, homodimer. It depends on Zn(2+) as a cofactor.

The protein localises to the cytoplasm. It catalyses the reaction tRNA(Thr) + L-threonine + ATP = L-threonyl-tRNA(Thr) + AMP + diphosphate + H(+). Its function is as follows. Catalyzes the attachment of threonine to tRNA(Thr) in a two-step reaction: L-threonine is first activated by ATP to form Thr-AMP and then transferred to the acceptor end of tRNA(Thr). Also edits incorrectly charged L-seryl-tRNA(Thr). This chain is Threonine--tRNA ligase, found in Caulobacter sp. (strain K31).